Consider the following 76-residue polypeptide: Small ribosomal subunit protein uS17 (76 aa).

Belongs to the universal ribosomal protein uS17 family. Part of the 30S ribosomal subunit.

Functionally, one of the primary rRNA binding proteins, it binds specifically to the 5'-end of 16S ribosomal RNA. The sequence is that of Small ribosomal subunit protein uS17 from Ruegeria pomeroyi (strain ATCC 700808 / DSM 15171 / DSS-3) (Silicibacter pomeroyi).